Reading from the N-terminus, the 440-residue chain is Probable secretory pathway GDP dissociation inhibitor 1 (440 aa).

It belongs to the Rab GDI family.

The polypeptide is Probable secretory pathway GDP dissociation inhibitor 1 (gdi1) (Schizosaccharomyces pombe (strain 972 / ATCC 24843) (Fission yeast)).